The primary structure comprises 334 residues: Phosphate acyltransferase (334 aa).

This sequence belongs to the PlsX family. In terms of assembly, homodimer. Probably interacts with PlsY.

Its subcellular location is the cytoplasm. It carries out the reaction a fatty acyl-[ACP] + phosphate = an acyl phosphate + holo-[ACP]. Its pathway is lipid metabolism; phospholipid metabolism. In terms of biological role, catalyzes the reversible formation of acyl-phosphate (acyl-PO(4)) from acyl-[acyl-carrier-protein] (acyl-ACP). This enzyme utilizes acyl-ACP as fatty acyl donor, but not acyl-CoA. In Halothermothrix orenii (strain H 168 / OCM 544 / DSM 9562), this protein is Phosphate acyltransferase.